Reading from the N-terminus, the 38-residue chain is Histidine decarboxylase small chain (38 aa).

In terms of assembly, heterohexamer of 3 large and 3 small chains. Pyruvate serves as cofactor.

The catalysed reaction is L-histidine + H(+) = histamine + CO2. This chain is Histidine decarboxylase small chain, found in Micrococcus sp.